We begin with the raw amino-acid sequence, 984 residues long: Serine/threonine-protein kinase N2 (984 aa).

Ser21 is subject to Phosphoserine. The REM-1 1 domain occupies 33 to 109 (KLDFSDTMVQ…LQELNAHIVV (77 aa)). At Lys77 the chain carries N6-acetyllysine. Ser110 carries the phosphoserine modification. Residues 114-133 (DITDCPRTPDTPNNDPRCST) are disordered. Phosphothreonine is present on residues Thr121 and Thr124. REM-1 domains are found at residues 121–203 (TPDT…TNEL) and 204–284 (AFDN…EVPK). A compositionally biased stretch (polar residues) spans 123–133 (DTPNNDPRCST). Phosphoserine is present on residues Ser302, Ser306, Ser360, and Ser362. The interval 351–383 (ATSVALPGWSPSETRSSFMSRTSKSKSGSSRNL) is disordered. Positions 353 to 473 (SVALPGWSPS…LYLEPQGTLF (121 aa)) constitute a C2 domain. A compositionally biased stretch (low complexity) spans 364–381 (TRSSFMSRTSKSKSGSSR). The segment at 382–463 (NLLKTDDLSN…FLDNQRHGMC (82 aa)) is necessary to rescue apical junction formation. A phosphoserine mark is found at Ser535, Ser583, and Ser620. Residues 558-584 (ASDSTVTKLDFDLEPEPPPAPPRASSL) form a disordered region. Thr628 is modified (phosphothreonine). Residue Ser631 is modified to Phosphoserine. One can recognise a Protein kinase domain in the interval 657-916 (FRCCAVLGRG…AEDVKKHPFF (260 aa)). ATP contacts are provided by residues 663–671 (LGRGHFGKV) and Lys686. The active-site Proton acceptor is the Asp782. At Thr816 the chain carries Phosphothreonine; by PDPK1. Residues 917–977 (RLIDWSALMD…EEEQEMFRDF (61 aa)) are necessary for the catalytic activity. The region spanning 917-984 (RLIDWSALMD…RDFDYIADWC (68 aa)) is the AGC-kinase C-terminal domain. Ser952 carries the post-translational modification Phosphoserine. Position 958 is a phosphothreonine (Thr958). The tract at residues 978 to 984 (DYIADWC) is negatively regulates the responsiveness of the catalytic activity by cardiolipin and is required for optimal activation by the GTP-bound RhoA.

It belongs to the protein kinase superfamily. AGC Ser/Thr protein kinase family. PKC subfamily. In terms of assembly, interacts (via the REM repeats) with RHOA (GTP-bound form preferentially) and interacts (via the REM repeats) with RAC1 (GTP-bound form preferentially); the interactions induce its autophosphorylation. Interacts with RHOC. Interacts with NCK1 and NCK2. Interacts with NCK1 (via SH3 domains). Interacts with CD44. Interacts (via C-terminal kinase domain) with PDPK1; the interaction stimulates PDPK1 kinase activity. Interacts with MAP3K2; the interaction activates PRK2 kinase activity in a MAP3K2-independent kinase activity. Interacts (via C-terminal domain) with AKT1; the interaction occurs with the C-terminal cleavage product of PRK2 in apoptotic cells. Interacts (via C-terminus) with PTPN13 (via PDZ 3 domain). Interacts with CDK10. (Microbial infection) Interacts with HCV NS5B (via N-terminal finger domain). In terms of processing, autophosphorylated. Phosphorylated during mitosis. Phosphorylated by CDK10. Activated by limited proteolysis with trypsin. Proteolytically cleaved by caspase-3 during the induction of apoptotic cell death. In terms of tissue distribution, ubiquitous. Expressed in numerous tumor cell lines, especially in bladder tumor cells.

Its subcellular location is the cytoplasm. It is found in the nucleus. The protein localises to the membrane. The protein resides in the cell projection. It localises to the lamellipodium. Its subcellular location is the cytoskeleton. It is found in the cleavage furrow. The protein localises to the midbody. The protein resides in the cell junction. It carries out the reaction L-seryl-[protein] + ATP = O-phospho-L-seryl-[protein] + ADP + H(+). It catalyses the reaction L-threonyl-[protein] + ATP = O-phospho-L-threonyl-[protein] + ADP + H(+). Kinase activity is activated upon binding to GTP-bound Rhoa/Rac1 GTPases. Activated by caspase-3 (CASP3) cleavage during apoptosis. Activated by lipids, particularly cardiolipin and to a lesser extent by other acidic phospholipids and unsaturated fatty acids. Two specific sites, Thr-816 (activation loop of the kinase domain) and Thr-958 (turn motif), need to be phosphorylated for its full activation. In terms of biological role, PKC-related serine/threonine-protein kinase and Rho/Rac effector protein that participates in specific signal transduction responses in the cell. Plays a role in the regulation of cell cycle progression, actin cytoskeleton assembly, cell migration, cell adhesion, tumor cell invasion and transcription activation signaling processes. Phosphorylates CTTN in hyaluronan-induced astrocytes and hence decreases CTTN ability to associate with filamentous actin. Phosphorylates HDAC5, therefore lead to impair HDAC5 import. Direct RhoA target required for the regulation of the maturation of primordial junctions into apical junction formation in bronchial epithelial cells. Required for G2/M phases of the cell cycle progression and abscission during cytokinesis in a ECT2-dependent manner. Stimulates FYN kinase activity that is required for establishment of skin cell-cell adhesion during keratinocytes differentiation. Regulates epithelial bladder cells speed and direction of movement during cell migration and tumor cell invasion. Inhibits Akt pro-survival-induced kinase activity. Mediates Rho protein-induced transcriptional activation via the c-fos serum response factor (SRF). Involved in the negative regulation of ciliogenesis. (Microbial infection) Phosphorylates HCV NS5B leading to stimulation of HCV RNA replication. The sequence is that of Serine/threonine-protein kinase N2 (PKN2) from Homo sapiens (Human).